The sequence spans 331 residues: Aspartate carbamoyltransferase catalytic subunit (331 aa).

Positions 76 and 77 each coordinate carbamoyl phosphate. Lysine 104 provides a ligand contact to L-aspartate. 3 residues coordinate carbamoyl phosphate: arginine 126, histidine 154, and glutamine 157. Positions 187 and 246 each coordinate L-aspartate. Residues glycine 287 and proline 288 each coordinate carbamoyl phosphate.

It belongs to the aspartate/ornithine carbamoyltransferase superfamily. ATCase family. In terms of assembly, heterododecamer (2C3:3R2) of six catalytic PyrB chains organized as two trimers (C3), and six regulatory PyrI chains organized as three dimers (R2).

The catalysed reaction is carbamoyl phosphate + L-aspartate = N-carbamoyl-L-aspartate + phosphate + H(+). Its pathway is pyrimidine metabolism; UMP biosynthesis via de novo pathway; (S)-dihydroorotate from bicarbonate: step 2/3. Its function is as follows. Catalyzes the condensation of carbamoyl phosphate and aspartate to form carbamoyl aspartate and inorganic phosphate, the committed step in the de novo pyrimidine nucleotide biosynthesis pathway. The polypeptide is Aspartate carbamoyltransferase catalytic subunit (Dehalococcoides mccartyi (strain CBDB1)).